We begin with the raw amino-acid sequence, 286 residues long: F-box/SPRY domain-containing protein 1 (286 aa).

An N-acetylalanine modification is found at alanine 2. Positions 33 to 82 (SGVGGRLPSRVLELVFSYLELSELRSCALVCKHWYRCLHGDENSEVWRSL) constitute an F-box domain. The B30.2/SPRY domain maps to 92–284 (LRTDILCNLP…VTLVYLGKPL (193 aa)).

It belongs to the FBXO45/Fsn family. In terms of assembly, forms a complex with MYCBP2 and SKP1. Interacts with HEY1; leading to FBXO45 nuclear translocation. Interacts (via SPRY domain) with CDH2. In terms of tissue distribution, expressed speciffically in the central nervous system, including cerebellum, medulla oblongata, olfactory bulb, hippocampus, cortex and brain stem.

It localises to the secreted. The protein resides in the postsynaptic cell membrane. The protein localises to the presynaptic cell membrane. It is found in the nucleus. It functions in the pathway protein modification; protein ubiquitination. Component of E3 ubiquitin ligase complex consisting of FBXO45, MYCBP2 and SKP1. Functions in substrate recognition but plays also an important role in assembly of the complex. Required for normal neuromuscular synaptogenesis, axon pathfinding and neuronal migration. Regulates neuron migration during brain development through interaction with N-cadherin/CDH2 after secretion via a non-classical mechanism. Plays a role in the regulation of neurotransmission at mature neurons. May control synaptic activity by controlling UNC13A via ubiquitin dependent pathway. Specifically recognizes TP73, promoting its ubiquitination and degradation. Polyubiquitinates NMNAT2, an adenylyltransferase that acts as an axon maintenance factor, and regulates its stability and degradation by the proteasome. Acts also by ubiquitinating FBXW7 during prolonged mitotic arrest and promotes FBXW7 proteasomal degradation. Induces subsequently an increase in mitotic slippage and prevents mitotic cell death. In response to influenza infection, mediates interferon-lambda receptor IFNLR1 polyubiquitination and degradation through the ubiquitin-proteasome system by docking with its intracellular receptor domain. This Mus musculus (Mouse) protein is F-box/SPRY domain-containing protein 1.